The following is a 238-amino-acid chain: Ribonuclease PH (238 aa).

Phosphate is bound by residues R86 and 124-126 (GTR).

Belongs to the RNase PH family. As to quaternary structure, homohexameric ring arranged as a trimer of dimers.

The enzyme catalyses tRNA(n+1) + phosphate = tRNA(n) + a ribonucleoside 5'-diphosphate. Functionally, phosphorolytic 3'-5' exoribonuclease that plays an important role in tRNA 3'-end maturation. Removes nucleotide residues following the 3'-CCA terminus of tRNAs; can also add nucleotides to the ends of RNA molecules by using nucleoside diphosphates as substrates, but this may not be physiologically important. Probably plays a role in initiation of 16S rRNA degradation (leading to ribosome degradation) during starvation. The protein is Ribonuclease PH of Haemophilus ducreyi (strain 35000HP / ATCC 700724).